We begin with the raw amino-acid sequence, 82 residues long: Large ribosomal subunit protein uL23 (82 aa).

It belongs to the universal ribosomal protein uL23 family. In terms of assembly, part of the 50S ribosomal subunit. Contacts protein L29.

Functionally, binds to 23S rRNA. One of the proteins that surrounds the polypeptide exit tunnel on the outside of the ribosome. This is Large ribosomal subunit protein uL23 from Methanosarcina barkeri (strain Fusaro / DSM 804).